The sequence spans 369 residues: GTPase Obg (369 aa).

Residues 1-159 enclose the Obg domain; the sequence is MKFIDEAKIE…RELRLELKVL (159 aa). Residues 128-148 form a disordered region; sequence IHFKSSTNRAPRQKSEGKEGE. An OBG-type G domain is found at 160–333; the sequence is ADIGLLGMPN…LVTEIYDYIA (174 aa). Residues 166–173, 191–195, 213–216, 283–286, and 314–316 each bind GTP; these read GMPNAGKS, FTTLH, DIPG, NKLD, and SAL. Positions 173 and 193 each coordinate Mg(2+).

Belongs to the TRAFAC class OBG-HflX-like GTPase superfamily. OBG GTPase family. Monomer. It depends on Mg(2+) as a cofactor.

It is found in the cytoplasm. Functionally, an essential GTPase which binds GTP, GDP and possibly (p)ppGpp with moderate affinity, with high nucleotide exchange rates and a fairly low GTP hydrolysis rate. Plays a role in control of the cell cycle, stress response, ribosome biogenesis and in those bacteria that undergo differentiation, in morphogenesis control. The chain is GTPase Obg from Herminiimonas arsenicoxydans.